Here is a 256-residue protein sequence, read N- to C-terminus: Osteocalcin 2 (256 aa).

Residues 1–18 (MKTLVLLSICALLSVCWS) form the signal peptide. The propeptide occupies 19 to 209 (MGAVEPEVVV…LASVLLRRRR (191 aa)). A compositionally biased stretch (low complexity) spans 38 to 186 (AAPADPAAAA…SSSSSSSSES (149 aa)). The tract at residues 38-193 (AAPADPAAAA…SESASDEAAK (156 aa)) is disordered. A Gla domain is found at 218–252 (PLQLESLREVCELNIACDEMAETAGIVAAYVAYYG). Ca(2+) contacts are provided by Glu-222, Glu-226, Glu-229, and Asp-235. A 4-carboxyglutamate mark is found at Glu-222, Glu-226, and Glu-229. Residues Cys-228 and Cys-234 are joined by a disulfide bond. At Glu-236 the chain carries 4-carboxyglutamate.

This sequence belongs to the osteocalcin/matrix Gla protein family. Gamma-carboxyglutamate residues are formed by vitamin K dependent carboxylation by GGCX. These residues are essential for the binding of calcium.

The protein localises to the secreted. In terms of biological role, the carboxylated form is one of the main organic components of the bone matrix, which constitutes 1-2% of the total bone protein. The carboxylated form binds strongly to apatite and calcium. This is Osteocalcin 2 from Diplodus sargus (White seabream).